The sequence spans 185 residues: Transcription termination/antitermination protein NusG (185 aa).

In terms of domain architecture, KOW spans 134–162; that stretch reads PGQMVRVIDGPFNDFDGLVEEVNYEKNRL.

It belongs to the NusG family.

Functionally, participates in transcription elongation, termination and antitermination. This Xylella fastidiosa (strain 9a5c) protein is Transcription termination/antitermination protein NusG.